Here is an 82-residue protein sequence, read N- to C-terminus: RNA-binding protein Hfq (82 aa).

In terms of domain architecture, Sm spans 10–69; the sequence is DPFLNALRREHVPVSIYLVNGIKLQGQIESFDQYVVLLRNTVTQMVYKHAISTIVPGRAV.

This sequence belongs to the Hfq family. In terms of assembly, homohexamer.

Functionally, RNA chaperone that binds small regulatory RNA (sRNAs) and mRNAs to facilitate mRNA translational regulation in response to envelope stress, environmental stress and changes in metabolite concentrations. Also binds with high specificity to tRNAs. This Albidiferax ferrireducens (strain ATCC BAA-621 / DSM 15236 / T118) (Rhodoferax ferrireducens) protein is RNA-binding protein Hfq.